The chain runs to 134 residues: Large ribosomal subunit protein mL41 (134 aa).

Residues 1 to 13 constitute a mitochondrion transit peptide; it reads MGFLTAVTQGLVR.

The protein belongs to the mitochondrion-specific ribosomal protein mL41 family. Component of the mitochondrial ribosome large subunit (39S) which comprises a 16S rRNA and about 50 distinct proteins. Interacts with BCL2. Was also identified in the 28S mitochondrial ribosome.

Its subcellular location is the mitochondrion. Component of the mitochondrial ribosome large subunit. Also involved in apoptosis and cell cycle. Enhances p53/TP53 stability, thereby contributing to p53/TP53-induced apoptosis in response to growth-inhibitory condition. Enhances p53/TP53 translocation to the mitochondria. Has the ability to arrest the cell cycle at the G1 phase, possibly by stabilizing the CDKN1A and CDKN1B (p27Kip1) proteins. This chain is Large ribosomal subunit protein mL41 (Mrpl41), found in Rattus norvegicus (Rat).